The primary structure comprises 131 residues: Sirohydrochlorin cobaltochelatase (131 aa).

His-12 acts as the Proton acceptor in catalysis. The Co(2+) site is built by His-12 and His-78. Positions 12 and 78 each coordinate Ni(2+). A substrate-binding site is contributed by 73-78; that stretch reads LASGVH.

It belongs to the CbiX family. CbiXS subfamily. As to quaternary structure, homotetramer; dimer of dimers.

The catalysed reaction is Co-sirohydrochlorin + 2 H(+) = sirohydrochlorin + Co(2+). It catalyses the reaction Ni-sirohydrochlorin + 2 H(+) = sirohydrochlorin + Ni(2+). It participates in cofactor biosynthesis; adenosylcobalamin biosynthesis; cob(II)yrinate a,c-diamide from sirohydrochlorin (anaerobic route): step 1/10. In terms of biological role, catalyzes the insertion of Co(2+) into sirohydrochlorin as part of the anaerobic pathway to cobalamin biosynthesis. Involved in the biosynthesis of the unique nickel-containing tetrapyrrole coenzyme F430, the prosthetic group of methyl-coenzyme M reductase (MCR), which plays a key role in methanogenesis and anaerobic methane oxidation. Catalyzes the insertion of Ni(2+) into sirohydrochlorin to yield Ni-sirohydrochlorin. This is Sirohydrochlorin cobaltochelatase from Methanococcoides burtonii (strain DSM 6242 / NBRC 107633 / OCM 468 / ACE-M).